Consider the following 584-residue polypeptide: N(6)-adenosine-methyltransferase subunit METTL3 (584 aa).

Disordered stretches follow at residues 1–65 and 162–221; these read MSDT…EHPP and KADD…SNKV. The segment covering 187–204 has biased composition (polar residues); that stretch reads RKSSVSLATASISQLTAS. Positions 213–220 match the Nuclear localization signal motif; that stretch reads DKKGRSNK. S-adenosyl-L-methionine is bound by residues 381-382 and aspartate 399; that span reads DI. The gate loop 1 stretch occupies residues 400 to 414; that stretch reads PPWDIHMELPYGTLT. 2 interaction with METTL14 regions span residues 454–458 and 468–484; these read DRVDE and QRII…NHGK. The tract at residues 466–483 is interphase loop; it reads QLQRIIRTGRTGHWLNHG. Positions 469-482 are positively charged region required for RNA-binding; it reads RIIRTGRTGHWLNH. The gate loop 2 stretch occupies residues 511-519; that stretch reads VRSTSHKPD. S-adenosyl-L-methionine-binding positions include lysine 517, 540–543, and 553–554; these read RPHN and NQ.

This sequence belongs to the MT-A70-like family. As to quaternary structure, heterodimer; heterodimerizes with mettl14 to form an antiparallel heterodimer that constitutes an active methyltransferase. Component of the WMM complex, a N6-methyltransferase complex composed of a catalytic subcomplex, named MAC, and of an associated subcomplex, named MACOM. The MAC subcomplex is composed of mettl3 and mettl14. Expressed in the hemato-vascular system: enriched in sorted endothelial cells and haemogenic endothelium.

The protein resides in the nucleus. It localises to the nucleus speckle. Its subcellular location is the cytoplasm. It catalyses the reaction an adenosine in mRNA + S-adenosyl-L-methionine = an N(6)-methyladenosine in mRNA + S-adenosyl-L-homocysteine + H(+). Its function is as follows. The METTL3-METTL14 heterodimer forms a N6-methyltransferase complex that methylates adenosine residues at the N(6) position of some RNAs and regulates various processes such as the circadian clock, differentiation of embryonic and hematopoietic stem cells, cortical neurogenesis, response to DNA damage, differentiation of T-cells and primary miRNA processing. In the heterodimer formed with mettl14, mettl3 constitutes the catalytic core. N6-methyladenosine (m6A), which takes place at the 5'-[AG]GAC-3' consensus sites of some mRNAs, plays a role in mRNA stability, processing and translation efficiency. M6A is also involved in hematopoietic stem cells specification: m6A methylation and subsequent destabilization of mRNAs, such as notch1a, leads to decreased Notch signaling, promoting endothelial to hematopoietic transition. M6A also takes place in other RNA molecules, such as primary miRNA (pri-miRNAs). Mediates methylation of pri-miRNAs. This is N(6)-adenosine-methyltransferase subunit METTL3 from Danio rerio (Zebrafish).